The sequence spans 263 residues: Hemophilin (263 aa).

Residues 1–20 form the signal peptide; that stretch reads MKISQLFLGLVACSTAFAYA. Heme b-binding residues include His42, Tyr58, Ser104, and His105.

As to quaternary structure, monomer in solution. Interacts with host hemoglobin.

It localises to the secreted. Functionally, part of a high affinity heme acquisition system. Functions as a hemophore that acquires heme from human hemoglobin and delivers the heme to its cognate receptor, HphR, facilitating transport of heme across the bacterial outer membrane. Apo HphA interacts specifically with human hemoglobin and steals heme through a passive process probably due to its high affinity for heme. It can also acquire heme complexed to human serum albumin. Plays a supporting role for full virulence, acting as an accessory factor that enhances the process of heme uptake. The chain is Hemophilin from Acinetobacter baumannii.